Consider the following 499-residue polypeptide: Glycerol kinase (499 aa).

ADP is bound at residue threonine 17. 3 residues coordinate ATP: threonine 17, threonine 18, and serine 19. Residue threonine 17 participates in sn-glycerol 3-phosphate binding. Arginine 21 provides a ligand contact to ADP. Arginine 87, glutamate 88, tyrosine 139, and aspartate 243 together coordinate sn-glycerol 3-phosphate. Glycerol-binding residues include arginine 87, glutamate 88, tyrosine 139, aspartate 243, and glutamine 244. ADP contacts are provided by threonine 265 and glycine 308. 4 residues coordinate ATP: threonine 265, glycine 308, glutamine 312, and glycine 409. Residues glycine 409 and asparagine 413 each contribute to the ADP site.

This sequence belongs to the FGGY kinase family.

The catalysed reaction is glycerol + ATP = sn-glycerol 3-phosphate + ADP + H(+). Its pathway is polyol metabolism; glycerol degradation via glycerol kinase pathway; sn-glycerol 3-phosphate from glycerol: step 1/1. Its activity is regulated as follows. Inhibited by fructose 1,6-bisphosphate (FBP). In terms of biological role, key enzyme in the regulation of glycerol uptake and metabolism. Catalyzes the phosphorylation of glycerol to yield sn-glycerol 3-phosphate. This Pseudomonas entomophila (strain L48) protein is Glycerol kinase.